We begin with the raw amino-acid sequence, 948 residues long: Insulin receptor substrate 1 (948 aa).

The 102-residue stretch at 8–109 folds into the PH domain; the sequence is GMALSGYLKK…WLDKLLVLQR (102 aa). Residues 122–236 form the IRS-type PTB domain; it reads YDQVWQVVIQ…SAMSAKTESN (115 aa). The segment at 247–270 is disordered; the sequence is PDLSHEPMRKRSSSANEASKPINV. 2 positions are modified to phosphoserine: S286 and S287. Polar residues predominate over residues 304 to 329; it reads RNGTLSESSNQTYFGSNHGLRSNTIS. The interval 304–373 is disordered; it reads RNGTLSESSN…SDDNGSFSHY (70 aa). S342 carries the phosphoserine modification. Y410 is modified (phosphotyrosine; by INSR). A YXXM motif 1 motif is present at residues 410–413; it reads YIPM. A disordered region spans residues 528–559; the sequence is ANRSQSSITKEGTSYSTSSNRQKKSTSAPLLS. Over residues 529–556 the composition is skewed to polar residues; sequence NRSQSSITKEGTSYSTSSNRQKKSTSAP. S554 is modified (phosphoserine). The YXXM motif 2 signature appears at 640-643; the sequence is YLEM. Positions 703 to 734 are disordered; that stretch reads EKKSNSPLNETPCSLKPTDVESNSHDEHSTNN. A compositionally biased stretch (basic and acidic residues) spans 720–731; that stretch reads TDVESNSHDEHS. Y891 carries the post-translational modification Phosphotyrosine; by INSR. Residues 907-948 form a disordered region; it reads YLKRGSRESPPVSACPGDGNTYAKIDFDQSDSSSSSSNIFNT. A phosphoserine mark is found at S912 and S915. Phosphotyrosine; by INSR is present on Y928. Positions 936–948 are enriched in low complexity; it reads SDSSSSSSNIFNT.

As to quaternary structure, bindings to phosphatidylinositol 3-kinase and SHP2.

Activates phosphatidylinositol 3-kinase when bound to the regulatory p85 subunit. May mediate the control of various cellular processes by insulin-like peptides. When phosphorylated by the insulin receptor binds specifically to various cellular proteins containing SH2 domains. Involved in control of cell proliferation, cell size, and body and organ growth throughout development. Also has a role in a signaling pathway controlling the physiological response required to endure periods of low nutrient conditions. Insulin/insulin-like growth factor (IGF) signaling pathway has a role in regulating aging and is necessary in the ovary for vitellogenic maturation. The protein is Insulin receptor substrate 1 of Drosophila erecta (Fruit fly).